Reading from the N-terminus, the 476-residue chain is Methylenetetrahydrofolate--tRNA-(uracil-5-)-methyltransferase TrmFO (476 aa).

13–18 (GGGLAG) is a binding site for FAD. The segment at 425 to 446 (PPLESPPTHGADGKKLRGPDKT) is disordered. The span at 435 to 446 (ADGKKLRGPDKT) shows a compositional bias: basic and acidic residues.

It belongs to the MnmG family. TrmFO subfamily. The cofactor is FAD.

The protein resides in the cytoplasm. The enzyme catalyses uridine(54) in tRNA + (6R)-5,10-methylene-5,6,7,8-tetrahydrofolate + NADH + H(+) = 5-methyluridine(54) in tRNA + (6S)-5,6,7,8-tetrahydrofolate + NAD(+). It carries out the reaction uridine(54) in tRNA + (6R)-5,10-methylene-5,6,7,8-tetrahydrofolate + NADPH + H(+) = 5-methyluridine(54) in tRNA + (6S)-5,6,7,8-tetrahydrofolate + NADP(+). Its function is as follows. Catalyzes the folate-dependent formation of 5-methyl-uridine at position 54 (M-5-U54) in all tRNAs. The chain is Methylenetetrahydrofolate--tRNA-(uracil-5-)-methyltransferase TrmFO from Rhodopseudomonas palustris (strain BisB18).